Here is a 608-residue protein sequence, read N- to C-terminus: Alpha-glycerophosphate oxidase (608 aa).

21–49 (DLLIIGGGITGAGVALQAAASGLETGLIE) provides a ligand contact to FAD. The interval 393-418 (SAVSKLESSTSEKHLDPSAVSRGSSL) is disordered.

Belongs to the FAD-dependent glycerol-3-phosphate dehydrogenase family. It depends on FAD as a cofactor.

The protein resides in the cell membrane. The enzyme catalyses sn-glycerol 3-phosphate + O2 = dihydroxyacetone phosphate + H2O2. Its pathway is membrane lipid metabolism; glycerophospholipid metabolism. This Streptococcus pneumoniae serotype 4 (strain ATCC BAA-334 / TIGR4) protein is Alpha-glycerophosphate oxidase (glpO).